The following is a 101-amino-acid chain: uncharacterized protein (101 aa).

Its subcellular location is the plastid. The protein resides in the chloroplast. This is an uncharacterized protein from Chlamydomonas reinhardtii (Chlamydomonas smithii).